Consider the following 109-residue polypeptide: Transcription initiation factor IIA subunit 2 (109 aa).

Belongs to the TFIIA subunit 2 family. As to quaternary structure, TFIIA is a heterodimer of the large unprocessed subunit 1 and a small subunit gamma. It was originally believed to be a heterotrimer of an alpha (p35), a beta (p19) and a gamma subunit (p12). Interacts with NCOA6 general coactivator. TFIIA forms a complex with TBP. Interacts with HSF1 (via transactivation domain). Part of TBP-based Pol II pre-initiation complex (PIC), in which Pol II core assembles with general transcription factors and other specific initiation factors including GTF2E1, GTF2E2, GTF2F1, GTF2F2, TCEA1, ERCC2, ERCC3, GTF2H2, GTF2H3, GTF2H4, GTF2H5, GTF2A1, GTF2A2, GTF2B and TBP; this large multi-subunit PIC complex mediates DNA unwinding and targets Pol II core to the transcription start site where the first phosphodiester bond forms.

The protein localises to the nucleus. Its function is as follows. TFIIA is a component of the transcription machinery of RNA polymerase II and plays an important role in transcriptional activation. TFIIA in a complex with TBP mediates transcriptional activity. This chain is Transcription initiation factor IIA subunit 2 (Gtf2a2), found in Rattus norvegicus (Rat).